Here is a 571-residue protein sequence, read N- to C-terminus: Urease subunit alpha (571 aa).

Positions Gly-131–Phe-571 constitute a Urease domain. The Ni(2+) site is built by His-136, His-138, and Lys-219. Lys-219 is subject to N6-carboxylysine. A substrate-binding site is contributed by His-221. Residues His-248 and His-274 each coordinate Ni(2+). Catalysis depends on His-322, which acts as the Proton donor. Residue Asp-362 participates in Ni(2+) binding.

The protein belongs to the metallo-dependent hydrolases superfamily. Urease alpha subunit family. In terms of assembly, heterotrimer of UreA (gamma), UreB (beta) and UreC (alpha) subunits. Three heterotrimers associate to form the active enzyme. Ni cation serves as cofactor. In terms of processing, carboxylation allows a single lysine to coordinate two nickel ions.

The protein localises to the cytoplasm. The enzyme catalyses urea + 2 H2O + H(+) = hydrogencarbonate + 2 NH4(+). It participates in nitrogen metabolism; urea degradation; CO(2) and NH(3) from urea (urease route): step 1/1. The protein is Urease subunit alpha of Nostoc punctiforme (strain ATCC 29133 / PCC 73102).